Consider the following 470-residue polypeptide: GTPase grn1 (470 aa).

Residues 1-16 (MVSLKKKSKRRTTRLR) show a composition bias toward basic residues. Residues 1–56 (MVSLKKKSKRRTTRLRSRIEKKAAESKRKQKRADKKNPQWKSRIPKDPGIPNSFPY) form a disordered region. Residues 17–27 (SRIEKKAAESK) are compositionally biased toward basic and acidic residues. The 181-residue stretch at 153–333 (DKEFKKVVEA…LVDSPGIVFP (181 aa)) folds into the CP-type G domain. GTP is bound by residues 202 to 205 (NKID), 276 to 283 (GYPNVGKS), and 326 to 329 (DSPG). Residues 405-415 (ARKRGRLGRGG) form an RNA-binding region.

The protein belongs to the TRAFAC class YlqF/YawG GTPase family.

Its subcellular location is the nucleus. It is found in the nucleolus. Functionally, required for optimal growth. Required for normal processing of ribosomal pre-rRNA. Required for nuclear export of ribosomal protein rpl2501. The chain is GTPase grn1 from Schizosaccharomyces pombe (strain 972 / ATCC 24843) (Fission yeast).